Consider the following 58-residue polypeptide: uncharacterized protein (58 aa).

2 disordered regions span residues 1-20 and 38-58; these read MKKNRHSRDMQNHKKPMNKK and IIETLEVTKPEKKKEKNKKQQ.

This is an uncharacterized protein from Bacillus subtilis (strain 168).